A 306-amino-acid polypeptide reads, in one-letter code: Acetyl-coenzyme A carboxylase carboxyl transferase subunit beta (306 aa).

Positions 27–296 constitute a CoA carboxyltransferase N-terminal domain; sequence LWHKCPSCEA…PRFVAPVIEP (270 aa). Zn(2+) contacts are provided by cysteine 31, cysteine 34, cysteine 50, and cysteine 53. A C4-type zinc finger spans residues 31-53; that stretch reads CPSCEAVLYRPELEKTLDVCPKC.

Belongs to the AccD/PCCB family. As to quaternary structure, acetyl-CoA carboxylase is a heterohexamer composed of biotin carboxyl carrier protein (AccB), biotin carboxylase (AccC) and two subunits each of ACCase subunit alpha (AccA) and ACCase subunit beta (AccD). It depends on Zn(2+) as a cofactor.

It localises to the cytoplasm. It carries out the reaction N(6)-carboxybiotinyl-L-lysyl-[protein] + acetyl-CoA = N(6)-biotinyl-L-lysyl-[protein] + malonyl-CoA. It participates in lipid metabolism; malonyl-CoA biosynthesis; malonyl-CoA from acetyl-CoA: step 1/1. Its function is as follows. Component of the acetyl coenzyme A carboxylase (ACC) complex. Biotin carboxylase (BC) catalyzes the carboxylation of biotin on its carrier protein (BCCP) and then the CO(2) group is transferred by the transcarboxylase to acetyl-CoA to form malonyl-CoA. This chain is Acetyl-coenzyme A carboxylase carboxyl transferase subunit beta, found in Pseudomonas syringae pv. syringae (strain B728a).